Consider the following 144-residue polypeptide: Large ribosomal subunit protein uL11m (144 aa).

A mitochondrion-targeting transit peptide spans Met1–Gly32.

The protein belongs to the universal ribosomal protein uL11 family. As to quaternary structure, component of the mitochondrial large ribosomal subunit (mt-LSU). Mature yeast 74S mitochondrial ribosomes consist of a small (37S) and a large (54S) subunit. The 37S small subunit contains a 15S ribosomal RNA (15S mt-rRNA) and at least 32 different proteins. The 54S large subunit contains a 21S rRNA (21S mt-rRNA) and at least 45 different proteins.

The protein localises to the mitochondrion. Its subcellular location is the cytoplasm. Component of the mitochondrial ribosome (mitoribosome), a dedicated translation machinery responsible for the synthesis of mitochondrial genome-encoded proteins, including at least some of the essential transmembrane subunits of the mitochondrial respiratory chain. The mitoribosomes are attached to the mitochondrial inner membrane and translation products are cotranslationally integrated into the membrane. The protein is Large ribosomal subunit protein uL11m of Schizosaccharomyces pombe (strain 972 / ATCC 24843) (Fission yeast).